A 285-amino-acid chain; its full sequence is MKFIGAHVSASGGVANAPARAAEIGATAFALFTKNQRQWRAAALTPAVIDEFKAACRKHGYGPGQILPHDSFLINLGHPEPEALEKSRAAFIDELARCAQLGLTLLNFHPGSHLQQLSEEACLSRIAESVNIALDKTEGVTAVIENTAGQGSNLGFRFEHLAAIIDQVEDKSRVGVCIDTCHAFAAGYDLRTEEDCEKTFAEFDRIVGFQYLRGMHLNDAKSTFASRVDRHHSLGEGNIGFTPFRWIMQQSHFDNIPLILETINPDIWNEEIAWLKAQQTGGAQA.

Residues histidine 69, histidine 109, glutamate 145, aspartate 179, histidine 182, histidine 216, aspartate 229, histidine 231, and glutamate 261 each contribute to the Zn(2+) site.

It belongs to the AP endonuclease 2 family. It depends on Zn(2+) as a cofactor.

It catalyses the reaction Endonucleolytic cleavage to 5'-phosphooligonucleotide end-products.. Its function is as follows. Endonuclease IV plays a role in DNA repair. It cleaves phosphodiester bonds at apurinic or apyrimidinic (AP) sites, generating a 3'-hydroxyl group and a 5'-terminal sugar phosphate. The sequence is that of Probable endonuclease 4 from Cronobacter sakazakii (strain ATCC BAA-894) (Enterobacter sakazakii).